Consider the following 226-residue polypeptide: Ribonuclease 3 (226 aa).

In terms of domain architecture, RNase III spans 6-128 (INRLQRKLGY…LIGGVFLDSN (123 aa)). A Mg(2+)-binding site is contributed by Glu-41. The active site involves Asp-45. Mg(2+)-binding residues include Asp-114 and Glu-117. Glu-117 is an active-site residue. Residues 155–225 (DPKTRLQEYL…AEQALKKLEL (71 aa)) form the DRBM domain.

The protein belongs to the ribonuclease III family. In terms of assembly, homodimer. Mg(2+) is required as a cofactor.

It localises to the cytoplasm. The catalysed reaction is Endonucleolytic cleavage to 5'-phosphomonoester.. Digests double-stranded RNA. Involved in the processing of primary rRNA transcript to yield the immediate precursors to the large and small rRNAs (23S and 16S). Processes some mRNAs, and tRNAs when they are encoded in the rRNA operon. Processes pre-crRNA and tracrRNA of type II CRISPR loci if present in the organism. This chain is Ribonuclease 3, found in Salmonella enteritidis PT4 (strain P125109).